Here is a 158-residue protein sequence, read N- to C-terminus: Small ribosomal subunit protein uS7 (158 aa).

This sequence belongs to the universal ribosomal protein uS7 family. In terms of assembly, part of the 30S ribosomal subunit. Contacts proteins S9 and S11.

In terms of biological role, one of the primary rRNA binding proteins, it binds directly to 16S rRNA where it nucleates assembly of the head domain of the 30S subunit. Is located at the subunit interface close to the decoding center, probably blocks exit of the E-site tRNA. This Acidiphilium cryptum (strain JF-5) protein is Small ribosomal subunit protein uS7.